The sequence spans 317 residues: MKVLYIQSGYGGIYSYFDRWAEECFQNTHTEYMIADKPEAESLMKIEAFQPDFTLMMVGDRVPHDWLTWLKGKDIPVYVWLTEDPFYMDISLQVIKLADAILTIEQNAALYYQELGYQNVYYVPIPVNHRLFKKMGTEHSYHSNLLIIGYPYPNRVQLMKEAVHLPFTVRVIGKEWGKYLPKKVLKQPHIDVVSTWVPPEQAVHYYNGADIVINAHRPYHFAFNQNTMRIKNASFNNRTFDIAACEAFQLTDLPAAHPFSSIISYHGMNDFKEKAAFYINHPEERQKAAAANYKETVPAFTFDELPAKLKAIHLALS.

May be involved in maturation of the outermost layer of the spore. May act as a glycosyltransferase that contributes to the glycosylation state of the spore. The chain is Spore protein CgeB from Bacillus subtilis (strain 168).